The chain runs to 415 residues: ATP-dependent RNA helicase RhlB (415 aa).

A Q motif motif is present at residues 9-37; sequence KKFSDFALYPPIVEVLDSKGFNNCTPIQA. The region spanning 40 to 219 is the Helicase ATP-binding domain; that stretch reads LPTTLAGKDV…FEHMNNAEYV (180 aa). 53–60 is an ATP binding site; it reads AQTGTGKT. Positions 165 to 168 match the DEAD box motif; sequence DEAD. One can recognise a Helicase C-terminal domain in the interval 245-390; that stretch reads RLLQTLIEEE…VSKYNSDALL (146 aa). The disordered stretch occupies residues 396-415; that stretch reads PKRLTRRRSGAPRHNRKRPG. Over residues 398 to 415 the composition is skewed to basic residues; sequence RLTRRRSGAPRHNRKRPG.

Belongs to the DEAD box helicase family. RhlB subfamily. In terms of assembly, component of the RNA degradosome, which is a multiprotein complex involved in RNA processing and mRNA degradation.

It is found in the cytoplasm. It catalyses the reaction ATP + H2O = ADP + phosphate + H(+). In terms of biological role, DEAD-box RNA helicase involved in RNA degradation. Has RNA-dependent ATPase activity and unwinds double-stranded RNA. The protein is ATP-dependent RNA helicase RhlB of Sodalis glossinidius (strain morsitans).